A 1273-amino-acid polypeptide reads, in one-letter code: Lysine-specific histone demethylase 2 (1273 aa).

The segment covering 199-230 (ENFFDANSPSSQQFPSTYPSRSQNPLSSSGDG) has biased composition (polar residues). The segment at 199–237 (ENFFDANSPSSQQFPSTYPSRSQNPLSSSGDGSTAIHAG) is disordered. Positions 247–307 (FSNYPYPLDA…LSKSVDNAVL (61 aa)) form a coiled coil. The SWIRM domain occupies 394–490 (AAEAARKCNL…YGCLSFDSSF (97 aa)). FAD contacts are provided by residues 509 to 551 (IAVV…ILEA), T517, E550, R558, and 572 to 573 (TQ). The tract at residues 542-1198 (LPPKVIILEA…GKILRYQRLT (657 aa)) is demethylase activity. Positions 571–596 (ATQINHHTSNSNSISSNSTSLNPKDV) are disordered. Over residues 574-590 (INHHTSNSNSISSNSTS) the composition is skewed to low complexity. Residues 681-767 (SVRISWISQF…NTVDTDFSKD (87 aa)) adopt a coiled-coil conformation. Residues 1115 to 1195 (SKPNANPFLL…AYAGKILRYQ (81 aa)) constitute a DNA-binding region (HMG box). FAD-binding positions include D1147 and 1156–1157 (ET). Positions 1215–1273 (KCQDEPIPDDEARLFMQAQREEEQRKQTQDDNISKSREASDEEYHDDGSSDSGYNGTRY) are disordered. Residues 1233-1253 (QREEEQRKQTQDDNISKSREA) show a composition bias toward basic and acidic residues. Over residues 1264–1273 (SDSGYNGTRY) the composition is skewed to polar residues.

The protein belongs to the flavin monoamine oxidase family. Component of the SWM histone demethylase complex composed of at least lsd1, lsd2, phf1 and phf2. Interacts directly with lsd1. FAD is required as a cofactor.

It localises to the nucleus. Functionally, catalytic component of the SWM histone demethylase complex that specifically demethylates H3K9me2, a specific tag for epigenetic transcriptional activation, thereby acting as a corepressor. Acts by oxidizing the substrate by FAD to generate the corresponding imine that is subsequently hydrolyzed. Has a role in regulating heterochromatin propagation and euchromatic transcription. Also has a gene activating role. This is Lysine-specific histone demethylase 2 (lsd2) from Schizosaccharomyces pombe (strain 972 / ATCC 24843) (Fission yeast).